Consider the following 109-residue polypeptide: Beta-keratin-related protein (109 aa).

Ser-2 carries the post-translational modification N-acetylserine.

It belongs to the avian keratin family.

The sequence is that of Beta-keratin-related protein (BKJ) from Coturnix japonica (Japanese quail).